Reading from the N-terminus, the 121-residue chain is Prismalin-14 (121 aa).

Positions Met-1 to Ala-16 are cleaved as a signal peptide. Pyrrolidone carboxylic acid is present on Gln-17. Tandem repeats lie at residues Pro-48–Arg-51, Pro-52–Arg-55, Pro-56–Tyr-59, and Pro-60–Ile-63. The segment at Pro-48–Ile-63 is 4 X 4 AA approximate tandem repeats of P-I-Y-R.

Expressed only at the mantle edge where it is found predominantly in the inner side of the outer mantle fold.

Its function is as follows. Displays inhibitory activity against calcium carbonate precipitation, binds calcium and affects crystallization of calcium carbonate in vitro. May be involved in calcification of the prismatic layer of the shell. This is Prismalin-14 from Pinctada fucata (Akoya pearl oyster).